The chain runs to 287 residues: ATP synthase gamma chain (287 aa).

This sequence belongs to the ATPase gamma chain family. F-type ATPases have 2 components, CF(1) - the catalytic core - and CF(0) - the membrane proton channel. CF(1) has five subunits: alpha(3), beta(3), gamma(1), delta(1), epsilon(1). CF(0) has three main subunits: a, b and c.

The protein localises to the cell inner membrane. Its function is as follows. Produces ATP from ADP in the presence of a proton gradient across the membrane. The gamma chain is believed to be important in regulating ATPase activity and the flow of protons through the CF(0) complex. The sequence is that of ATP synthase gamma chain from Hahella chejuensis (strain KCTC 2396).